The chain runs to 316 residues: N-acetyl-gamma-glutamyl-phosphate reductase (316 aa).

Residue Cys136 is part of the active site.

It belongs to the NAGSA dehydrogenase family. Type 1 subfamily.

It localises to the cytoplasm. The catalysed reaction is N-acetyl-L-glutamate 5-semialdehyde + phosphate + NADP(+) = N-acetyl-L-glutamyl 5-phosphate + NADPH + H(+). The protein operates within amino-acid biosynthesis; L-arginine biosynthesis; N(2)-acetyl-L-ornithine from L-glutamate: step 3/4. In terms of biological role, catalyzes the NADPH-dependent reduction of N-acetyl-5-glutamyl phosphate to yield N-acetyl-L-glutamate 5-semialdehyde. The chain is N-acetyl-gamma-glutamyl-phosphate reductase from Xanthomonas campestris pv. campestris (strain ATCC 33913 / DSM 3586 / NCPPB 528 / LMG 568 / P 25).